A 349-amino-acid polypeptide reads, in one-letter code: Phosphate acyltransferase (349 aa).

The protein belongs to the PlsX family. As to quaternary structure, homodimer. Probably interacts with PlsY.

The protein resides in the cytoplasm. The enzyme catalyses a fatty acyl-[ACP] + phosphate = an acyl phosphate + holo-[ACP]. The protein operates within lipid metabolism; phospholipid metabolism. In terms of biological role, catalyzes the reversible formation of acyl-phosphate (acyl-PO(4)) from acyl-[acyl-carrier-protein] (acyl-ACP). This enzyme utilizes acyl-ACP as fatty acyl donor, but not acyl-CoA. In Albidiferax ferrireducens (strain ATCC BAA-621 / DSM 15236 / T118) (Rhodoferax ferrireducens), this protein is Phosphate acyltransferase.